The following is a 348-amino-acid chain: MGKDYYKILGIPSGANEDEIKKAYRKMALKYHPDKNKEPNAEEKFKEIAEAYDVLSDPKKRGLYDQYGEEGLKTGGGSSGGSSGSFHYTFHGDPHATFASFFGGSNPFDIFFASSRSARPFSGFDPDDMDVDEDDDPFGAFGRFGFNGLSRGPRRAPEPLYPRRKVQDPPVVHELRVSLEEIYHGSTKRMKITRRRLNPDGRTVRTEDKILHIVIKRGWKEGTKITFPKEGDATPDNIPADIVFVLKDKPHAHFRRDGTNVLYSALISLKEALCGCTVNIPTIDGRVIPLPCNDVIKPGTVKRLRGEGLPFPKVPTQRGDLIVEFKVRFPDRLTPQTRQILKQHLPCS.

Positions 4-68 (DYYKILGIPS…KKRGLYDQYG (65 aa)) constitute a J domain.

The protein is DnaJ homolog subfamily B member 5 (DNAJB5) of Bos taurus (Bovine).